A 636-amino-acid polypeptide reads, in one-letter code: 1-deoxy-D-xylulose-5-phosphate synthase (636 aa).

Residues histidine 74 and 115–117 contribute to the thiamine diphosphate site; that span reads GHA. Position 146 (aspartate 146) interacts with Mg(2+). Thiamine diphosphate is bound by residues 147–148, asparagine 175, tyrosine 285, and glutamate 368; that span reads GA. Asparagine 175 contributes to the Mg(2+) binding site.

Belongs to the transketolase family. DXPS subfamily. In terms of assembly, homodimer. Requires Mg(2+) as cofactor. Thiamine diphosphate serves as cofactor.

The enzyme catalyses D-glyceraldehyde 3-phosphate + pyruvate + H(+) = 1-deoxy-D-xylulose 5-phosphate + CO2. Its pathway is metabolic intermediate biosynthesis; 1-deoxy-D-xylulose 5-phosphate biosynthesis; 1-deoxy-D-xylulose 5-phosphate from D-glyceraldehyde 3-phosphate and pyruvate: step 1/1. In terms of biological role, catalyzes the acyloin condensation reaction between C atoms 2 and 3 of pyruvate and glyceraldehyde 3-phosphate to yield 1-deoxy-D-xylulose-5-phosphate (DXP). This is 1-deoxy-D-xylulose-5-phosphate synthase from Anaeromyxobacter dehalogenans (strain 2CP-1 / ATCC BAA-258).